Here is a 473-residue protein sequence, read N- to C-terminus: Cysteine--tRNA ligase (473 aa).

C30 lines the Zn(2+) pocket. Positions 32 to 42 (MTVYDYCHIGH) match the 'HIGH' region motif. C213, H238, and E242 together coordinate Zn(2+). The 'KMSKS' region signature appears at 270 to 274 (KMSKS). K273 provides a ligand contact to ATP.

This sequence belongs to the class-I aminoacyl-tRNA synthetase family. Monomer. It depends on Zn(2+) as a cofactor.

The protein localises to the cytoplasm. The enzyme catalyses tRNA(Cys) + L-cysteine + ATP = L-cysteinyl-tRNA(Cys) + AMP + diphosphate. This is Cysteine--tRNA ligase from Acinetobacter baumannii (strain ACICU).